The sequence spans 238 residues: MANRFRSGISFFKTIAVTDSVSSVRSKSLFPALRTYATASAQTTANVKVPIALVGENGNFASWLYIAAVKMNSLEKIETDLSEMIEAMKTAPIFAQFTKDPSVPRGTRLAAIRDACDQAKFAEPTKNFLSLLAENGKLKNLDAIVKKFMQLTNAHRGDVKVLVTTVIPLPPAEEKELTETLQEIIGAGKKITVEQKIDPSIYGGLIVEFQQKVLDMSIRTRAQQMERLLREPVDFNNL.

The transit peptide at 1–36 (MANRFRSGISFFKTIAVTDSVSSVRSKSLFPALRTY) directs the protein to the mitochondrion. Thr-90 is subject to Phosphothreonine.

It belongs to the ATPase delta chain family. As to quaternary structure, F-type ATPases have 2 components, CF(1) - the catalytic core - and CF(0) - the membrane proton channel. CF(1) has five subunits: alpha(3), beta(3), gamma(1), delta(1), epsilon(1). CF(0) has three main subunits: a, b and c.

It localises to the mitochondrion. It is found in the mitochondrion inner membrane. Functionally, mitochondrial membrane ATP synthase (F(1)F(0) ATP synthase or Complex V) produces ATP from ADP in the presence of a proton gradient across the membrane which is generated by electron transport complexes of the respiratory chain. F-type ATPases consist of two structural domains, F(1) - containing the extramembraneous catalytic core and F(0) - containing the membrane proton channel, linked together by a central stalk and a peripheral stalk. During catalysis, ATP synthesis in the catalytic domain of F(1) is coupled via a rotary mechanism of the central stalk subunits to proton translocation. Part of the complex F(0) domain and the peripheric stalk, which acts as a stator to hold the catalytic alpha(3)beta(3) subcomplex and subunit a/ATP6 static relative to the rotary elements. The polypeptide is ATP synthase subunit O, mitochondrial (Arabidopsis thaliana (Mouse-ear cress)).